Consider the following 140-residue polypeptide: Cytochrome c-type biogenesis protein CcmE (140 aa).

Over methionine 1 to arginine 7 the chain is Cytoplasmic. The chain crosses the membrane as a helical; Signal-anchor for type II membrane protein span at residues methionine 8–alanine 28. The Periplasmic segment spans residues phenylalanine 29–glutamine 140. The heme site is built by histidine 120 and tyrosine 124.

The protein belongs to the CcmE/CycJ family.

The protein resides in the cell inner membrane. Its function is as follows. Heme chaperone required for the biogenesis of c-type cytochromes. Transiently binds heme delivered by CcmC and transfers the heme to apo-cytochromes in a process facilitated by CcmF and CcmH. The protein is Cytochrome c-type biogenesis protein CcmE of Vesicomyosocius okutanii subsp. Calyptogena okutanii (strain HA).